We begin with the raw amino-acid sequence, 694 residues long: Long-chain-fatty-acid--CoA ligase 3 (694 aa).

The tract at residues 1–25 (MSEQHSVAVGKAANEHETAPRRNVR) is disordered. The residue at position 2 (S2) is an N-acetylserine. An ATP-binding site is contributed by 269–280 (YTSGSISAPKGV). The FACS motif lies at 527–576 (DGWFRTGDIVEWTPKGQLKIIDRRKNLVKTLNGEYIALEKLESVYRSNSY).

The protein belongs to the ATP-dependent AMP-binding enzyme family. Interacts with FRK1. The cofactor is Mg(2+).

Its subcellular location is the cell membrane. The enzyme catalyses a long-chain fatty acid + ATP + CoA = a long-chain fatty acyl-CoA + AMP + diphosphate. It carries out the reaction (9Z)-octadecenoate + ATP + CoA = (9Z)-octadecenoyl-CoA + AMP + diphosphate. The catalysed reaction is hexadecanoate + ATP + CoA = hexadecanoyl-CoA + AMP + diphosphate. It catalyses the reaction (9Z)-hexadecenoate + ATP + CoA = (9Z)-hexadecenoyl-CoA + AMP + diphosphate. The enzyme catalyses (9Z)-tetradecenoate + ATP + CoA = (9Z)-tetradecenoyl-CoA + AMP + diphosphate. It carries out the reaction (9Z,12Z)-octadecadienoate + ATP + CoA = (9Z,12Z)-octadecadienoyl-CoA + AMP + diphosphate. Functionally, activates endogenous long-chain fatty acids (LCFA) by esterification of the fatty acids into metabolically active CoA-thioesters for subsequent degradation or incorporation into phospholipids. Acts preferentially on C16 and C18 fatty acids with a cis-double bond at C-9-C-10. The protein is Long-chain-fatty-acid--CoA ligase 3 (FAA3) of Saccharomyces cerevisiae (strain ATCC 204508 / S288c) (Baker's yeast).